The chain runs to 728 residues: Histone demethylase JHD2 (728 aa).

The JmjN domain occupies 4 to 47 (IPALYPTEQEFKNPIDYLSNPHIKRLGVRYGMVKVVPPNGFCPP). A PHD-type zinc finger spans residues 235–285 (DDACIVCRKTNDPKRTILCDSCDKPFHIYCLSPPLERVPSGDWICNTCIVG). Residues 381 to 549 (KYCDHPMNLT…YGFGAITDYK (169 aa)) form the JmjC domain. The Fe cation site is built by histidine 427, aspartate 430, and histidine 517.

Belongs to the JARID1 histone demethylase family. The cofactor is Fe(2+).

The protein localises to the nucleus. It carries out the reaction N(6),N(6),N(6)-trimethyl-L-lysyl(4)-[histone H3] + 3 2-oxoglutarate + 3 O2 = L-lysyl(4)-[histone H3] + 3 formaldehyde + 3 succinate + 3 CO2. In terms of biological role, histone demethylase that demethylates 'Lys-4' of histone H3, thereby playing a central role in histone code. Demethylates trimethylated H3 'Lys-4'. This Saccharomyces cerevisiae (strain ATCC 204508 / S288c) (Baker's yeast) protein is Histone demethylase JHD2 (JHD2).